The sequence spans 1921 residues: Disks large homolog 5 (1921 aa).

A CARD domain is found at 1-90; that stretch reads MEPQRRELLA…HLLPILYLNG (90 aa). The disordered stretch occupies residues 116-143; sequence ESSSSLSSVGTTGKAPSPPPLLTEQQAN. A coiled-coil region spans residues 139-601; that stretch reads EQQANDTVEN…KEARFRQLMA (463 aa). Phosphoserine occurs at positions 264 and 295. PDZ domains are found at residues 620 to 710 and 705 to 796; these read VVEF…RRRK and VVRR…LKVF. The disordered stretch occupies residues 857–898; sequence ELGHSGGSSSFLHKPFSGSSSPVSPQACPSTSERSLNSFRSD. The segment covering 873-898 has biased composition (polar residues); sequence SGSSSPVSPQACPSTSERSLNSFRSD. Ser-900 carries the post-translational modification Phosphoserine. The interval 930-1121 is disordered; sequence EVPLDKIDPE…RPKSAPSFRP (192 aa). Thr-984 is modified (phosphothreonine). A Phosphoserine modification is found at Ser-1000. At Thr-1011 the chain carries Phosphothreonine. Basic and acidic residues predominate over residues 1017–1030; sequence RRSDSIKFQHRLET. Position 1021 is a phosphoserine (Ser-1021). A compositionally biased stretch (pro residues) spans 1045 to 1055; the sequence is TSPPSAPPPSM. Thr-1183 is subject to Phosphothreonine. Disordered regions lie at residues 1204–1227, 1243–1266, and 1280–1343; these read VLPC…SVQH, YSEM…SSSN, and PRYP…KDRP. A Phosphoserine modification is found at Ser-1209. Positions 1217-1227 are enriched in polar residues; it reads GSQSLSPSVQH. Low complexity predominate over residues 1252–1266; that stretch reads SNSLPSSARLGSSSN. Ser-1263 is subject to Phosphoserine. The span at 1292 to 1324 shows a compositional bias: polar residues; the sequence is GSLSHSECSTPPRSPLNIDTLSSCSQPQTTAST. Ser-1334 is subject to Phosphoserine. Residues 1350 to 1429 enclose the PDZ 3 domain; the sequence is HVKVQKGSEP…TITILAQYNP (80 aa). 3 stretches are compositionally biased toward polar residues: residues 1434–1443, 1450–1460, and 1483–1495; these read LNSHSRSSSH, PHSTLQGSSAG, and AKQS…SVGD. Residues 1434 to 1501 form a disordered region; it reads LNSHSRSSSH…SVGDTTKKTP (68 aa). Positions 1504–1585 constitute a PDZ 4 domain; that stretch reads RIVFIKKSQL…SLRLKVQYRH (82 aa). Residues 1596–1664 form the SH3 domain; the sequence is GDSFYIRALY…PSKYVMDQEF (69 aa). Phosphoserine is present on Ser-1669. Residues 1724–1907 enclose the Guanylate kinase-like domain; sequence DSVSLAYQRV…ICTQILAMVS (184 aa).

This sequence belongs to the MAGUK family. In terms of assembly, interacts with MPP1. Interacts with CTNNB1 and with the third SH3 domain of SORBS3 to form a ternary complex. Interacts (via coiled-coil domain) with MARK3. Interacts (via PDZ domain 3) with STK3/MST2 and STK4/MST1. Interacts with SCRIB. Interacts with CTNB1. Interacts with SMO and (via PDZ4 or guanylate kinase-like domain) with KIF7. As to expression, brain (at protein level).

The protein localises to the cell junction. It localises to the cell membrane. The protein resides in the postsynaptic density. It is found in the cytoplasm. Its subcellular location is the cytoskeleton. The protein localises to the cilium basal body. Functionally, acts as a regulator of the Hippo signaling pathway. Negatively regulates the Hippo signaling pathway by mediating the interaction of MARK3 with STK3/4, bringing them together to promote MARK3-dependent hyperphosphorylation and inactivation of STK3 kinase activity toward LATS1. Positively regulates the Hippo signaling by mediating the interaction of SCRIB with STK4/MST1 and LATS1 which is important for the activation of the Hippo signaling pathway. Involved in regulating cell proliferation, maintenance of epithelial polarity, epithelial-mesenchymal transition (EMT), cell migration and invasion. Plays an important role in dendritic spine formation and synaptogenesis in cortical neurons; regulates synaptogenesis by enhancing the cell surface localization of N-cadherin. Acts as a positive regulator of hedgehog (Hh) signaling pathway. Plays a critical role in the early point of the SMO activity cycle by interacting with SMO at the ciliary base to induce the accumulation of KIF7 and GLI2 at the ciliary tip for GLI2 activation. The chain is Disks large homolog 5 (Dlg5) from Mus musculus (Mouse).